The sequence spans 264 residues: Glutamate racemase (264 aa).

Substrate-binding positions include 10-11 (DS) and 42-43 (YG). Cys73 acts as the Proton donor/acceptor in catalysis. A substrate-binding site is contributed by 74–75 (NT). Cys183 (proton donor/acceptor) is an active-site residue. A substrate-binding site is contributed by 184–185 (TH).

It belongs to the aspartate/glutamate racemases family.

It carries out the reaction L-glutamate = D-glutamate. It participates in cell wall biogenesis; peptidoglycan biosynthesis. Provides the (R)-glutamate required for cell wall biosynthesis. In Streptococcus pyogenes serotype M18 (strain MGAS8232), this protein is Glutamate racemase.